The primary structure comprises 398 residues: Exodeoxyribonuclease 7 large subunit (398 aa).

This sequence belongs to the XseA family. As to quaternary structure, heterooligomer composed of large and small subunits.

The protein resides in the cytoplasm. The enzyme catalyses Exonucleolytic cleavage in either 5'- to 3'- or 3'- to 5'-direction to yield nucleoside 5'-phosphates.. Its function is as follows. Bidirectionally degrades single-stranded DNA into large acid-insoluble oligonucleotides, which are then degraded further into small acid-soluble oligonucleotides. This is Exodeoxyribonuclease 7 large subunit from Anaplasma phagocytophilum (strain HZ).